The sequence spans 116 residues: Holo-[acyl-carrier-protein] synthase (116 aa).

Residues Asp-5 and Glu-50 each coordinate Mg(2+).

Belongs to the P-Pant transferase superfamily. AcpS family. Requires Mg(2+) as cofactor.

It localises to the cytoplasm. It carries out the reaction apo-[ACP] + CoA = holo-[ACP] + adenosine 3',5'-bisphosphate + H(+). Functionally, transfers the 4'-phosphopantetheine moiety from coenzyme A to a Ser of acyl-carrier-protein. The protein is Holo-[acyl-carrier-protein] synthase of Campylobacter lari (strain RM2100 / D67 / ATCC BAA-1060).